A 751-amino-acid chain; its full sequence is Photosystem I P700 chlorophyll a apoprotein A1 (751 aa).

The next 8 membrane-spanning stretches (helical) occupy residues 73–96 (VFSA…FHGA), 159–182 (LYAT…FHYH), 198–222 (MNHH…HISL), 294–312 (EAHH…GHQY), 349–372 (WHAQ…HHMY), 388–414 (LSLF…IFMV), 436–458 (AIIS…LYIH), and 533–551 (FLVH…LILL). [4Fe-4S] cluster-binding residues include cysteine 575 and cysteine 584. The next 2 helical transmembrane spans lie at 591–612 (HVFL…HFSW) and 665–687 (LSAY…MFLF). Histidine 676 is a binding site for chlorophyll a'. Residues methionine 684 and tyrosine 692 each contribute to the chlorophyll a site. Tryptophan 693 lines the phylloquinone pocket. A helical transmembrane segment spans residues 725-745 (AVGVAHYLLGGIATTWSFFLA).

The protein belongs to the PsaA/PsaB family. In terms of assembly, the PsaA/B heterodimer binds the P700 chlorophyll special pair and subsequent electron acceptors. PSI consists of a core antenna complex that captures photons, and an electron transfer chain that converts photonic excitation into a charge separation. The eukaryotic PSI reaction center is composed of at least 11 subunits. The cofactor is P700 is a chlorophyll a/chlorophyll a' dimer, A0 is one or more chlorophyll a, A1 is one or both phylloquinones and FX is a shared 4Fe-4S iron-sulfur center..

The protein localises to the plastid. It localises to the chloroplast thylakoid membrane. The enzyme catalyses reduced [plastocyanin] + hnu + oxidized [2Fe-2S]-[ferredoxin] = oxidized [plastocyanin] + reduced [2Fe-2S]-[ferredoxin]. Functionally, psaA and PsaB bind P700, the primary electron donor of photosystem I (PSI), as well as the electron acceptors A0, A1 and FX. PSI is a plastocyanin/cytochrome c6-ferredoxin oxidoreductase, converting photonic excitation into a charge separation, which transfers an electron from the donor P700 chlorophyll pair to the spectroscopically characterized acceptors A0, A1, FX, FA and FB in turn. Oxidized P700 is reduced on the lumenal side of the thylakoid membrane by plastocyanin or cytochrome c6. The protein is Photosystem I P700 chlorophyll a apoprotein A1 of Oltmannsiellopsis viridis (Marine flagellate).